The sequence spans 346 residues: Annexin A1 (346 aa).

At Ala-2 the chain carries N-acetylalanine. Ser-5 bears the Phosphoserine; by TRPM7 mark. An Isoglutamyl lysine isopeptide (Gln-Lys) (interchain with K-?) cross-link involves residue Gln-19. Position 21 is a phosphotyrosine; by EGFR (Tyr-21). Ser-27 is modified (phosphoserine; by PKC). 2 positions are modified to phosphoserine: Ser-34 and Ser-37. 4 Annexin repeats span residues 42–113, 114–185, 197–269, and 273–344; these read FNPS…AMLK, TPAQ…ALAK, DLAD…TIVK, and STPA…ALCG. Position 58 is an N6-acetyllysine (Lys-58). Residues Gly-59, Val-60, Glu-62, Lys-97, Leu-100, Glu-105, Met-127, Gly-129, Gly-131, Thr-132, and Glu-134 each coordinate Ca(2+). At Thr-136 the chain carries Phosphothreonine. Ca(2+) is bound by residues Asp-171, Gly-210, and Arg-213. Residue Lys-214 forms a Glycyl lysine isopeptide (Lys-Gly) (interchain with G-Cter in SUMO1); alternate linkage. A Glycyl lysine isopeptide (Lys-Gly) (interchain with G-Cter in SUMO2); alternate cross-link involves residue Lys-214. The Ca(2+) site is built by Gly-215, Asp-253, Glu-255, and Leu-256. Lys-257 participates in a covalent cross-link: Glycyl lysine isopeptide (Lys-Gly) (interchain with G-Cter in SUMO1). Residues Glu-261, Met-286, Gly-288, and Gly-290 each contribute to the Ca(2+) site. An N6-acetyllysine modification is found at Lys-312. A disulfide bridge connects residues Cys-324 and Cys-343. Leu-328, Glu-330, and Thr-331 together coordinate Ca(2+). Lys-332 participates in a covalent cross-link: Glycyl lysine isopeptide (Lys-Gly) (interchain with G-Cter in SUMO1). Glu-336 is a Ca(2+) binding site.

This sequence belongs to the annexin family. As to quaternary structure, homodimer; non-covalently linked. Homodimer; linked by transglutamylation. Homodimers linked by transglutamylation are observed in placenta, but not in other tissues. Interacts with S100A11. Heterotetramer, formed by two molecules each of S100A11 and ANXA1. Interacts with DYSF. Interacts with EGFR. Post-translationally, phosphorylated by protein kinase C, EGFR and TRPM7. Phosphorylated in response to EGF treatment. In terms of processing, sumoylated. Proteolytically cleaved by cathepsin CTSG to release the active N-terminal peptide Ac2-26. In terms of tissue distribution, detected in eosinophils. Detected in lung, placenta, spleen and thymus (at protein level).

Its subcellular location is the nucleus. The protein localises to the cytoplasm. It is found in the cell projection. It localises to the cilium. The protein resides in the basolateral cell membrane. Its subcellular location is the lateral cell membrane. The protein localises to the cell membrane. It is found in the apical cell membrane. It localises to the membrane. The protein resides in the endosome membrane. Its subcellular location is the secreted. The protein localises to the extracellular space. It is found in the early endosome. It localises to the cytoplasmic vesicle membrane. The protein resides in the extracellular exosome. Its subcellular location is the cytoplasmic vesicle. The protein localises to the secretory vesicle lumen. It is found in the phagocytic cup. In terms of biological role, plays important roles in the innate immune response as effector of glucocorticoid-mediated responses and regulator of the inflammatory process. Has anti-inflammatory activity. Plays a role in glucocorticoid-mediated down-regulation of the early phase of the inflammatory response. Contributes to the adaptive immune response by enhancing signaling cascades that are triggered by T-cell activation, regulates differentiation and proliferation of activated T-cells. Promotes the differentiation of T-cells into Th1 cells and negatively regulates differentiation into Th2 cells. Has no effect on unstimulated T-cells. Negatively regulates hormone exocytosis via activation of the formyl peptide receptors and reorganization of the actin cytoskeleton. Has high affinity for Ca(2+) and can bind up to eight Ca(2+) ions. Displays Ca(2+)-dependent binding to phospholipid membranes. Plays a role in the formation of phagocytic cups and phagosomes. Plays a role in phagocytosis by mediating the Ca(2+)-dependent interaction between phagosomes and the actin cytoskeleton. Functionally, functions at least in part by activating the formyl peptide receptors and downstream signaling cascades. Promotes chemotaxis of granulocytes and monocytes via activation of the formyl peptide receptors. Promotes rearrangement of the actin cytoskeleton, cell polarization and cell migration. Promotes resolution of inflammation and wound healing. Acts via neutrophil N-formyl peptide receptors to enhance the release of CXCL2. The chain is Annexin A1 (Anxa1) from Rattus norvegicus (Rat).